Consider the following 35-residue polypeptide: Photosystem II reaction center protein T (35 aa).

The chain crosses the membrane as a helical span at residues 3-23 (ALVYTFLLVSTLGIIFFAIFF).

The protein belongs to the PsbT family. PSII is composed of 1 copy each of membrane proteins PsbA, PsbB, PsbC, PsbD, PsbE, PsbF, PsbH, PsbI, PsbJ, PsbK, PsbL, PsbM, PsbT, PsbY, PsbZ, Psb30/Ycf12, at least 3 peripheral proteins of the oxygen-evolving complex and a large number of cofactors. It forms dimeric complexes.

The protein localises to the plastid. The protein resides in the chloroplast thylakoid membrane. Its function is as follows. Found at the monomer-monomer interface of the photosystem II (PS II) dimer, plays a role in assembly and dimerization of PSII. PSII is a light-driven water plastoquinone oxidoreductase, using light energy to abstract electrons from H(2)O, generating a proton gradient subsequently used for ATP formation. This is Photosystem II reaction center protein T from Schisandra chinensis (Chinese magnolia vine).